A 115-amino-acid polypeptide reads, in one-letter code: U3-lycotoxin-Ls1a (115 aa).

The first 20 residues, 1 to 20 (MKFVLLFGVFLVTLFSYSSA), serve as a signal peptide directing secretion. The propeptide occupies 21–44 (EMLDDFDQADEDELLSLIEKEEAR). Intrachain disulfides connect C48–C63, C55–C72, C62–C87, and C74–C85.

The protein belongs to the neurotoxin 19 (CSTX) family. 01 subfamily. Expressed by the venom gland.

The protein localises to the secreted. The chain is U3-lycotoxin-Ls1a from Lycosa singoriensis (Wolf spider).